The sequence spans 160 residues: Dysbindin domain-containing protein 1 (160 aa).

2 disordered regions span residues 1–34 (MESP…GDTC) and 95–160 (ADSD…PKED). Ser3, Ser97, and Ser121 each carry phosphoserine. A compositionally biased stretch (basic and acidic residues) spans 127 to 143 (TRAEQNREKQTPSDPER).

It belongs to the dysbindin family.

In Rattus norvegicus (Rat), this protein is Dysbindin domain-containing protein 1 (Dbndd1).